A 445-amino-acid polypeptide reads, in one-letter code: NAD-specific glutamate dehydrogenase (445 aa).

Residue Lys124 is part of the active site. Position 235-241 (235-241 (GFGNVAW)) interacts with NAD(+).

Belongs to the Glu/Leu/Phe/Val dehydrogenases family. In terms of assembly, homohexamer.

The catalysed reaction is L-glutamate + NAD(+) + H2O = 2-oxoglutarate + NH4(+) + NADH + H(+). The polypeptide is NAD-specific glutamate dehydrogenase (gdhB) (Bacteroides fragilis (strain YCH46)).